Consider the following 455-residue polypeptide: Putative PTS system EIIBC component YbbF (455 aa).

One can recognise a PTS EIIB type-1 domain in the interval 8–90 (HHLAQKILEL…SKLVSAEEGA (83 aa)). C30 (phosphocysteine intermediate; for EIIB activity) is an active-site residue. The PTS EIIC type-1 domain maps to 116-455 (RKIASIFIPL…YKDEMASQFD (340 aa)). 10 helical membrane passes run 118–138 (IASIFIPLIPALVASGLITGI), 154–174 (IAIILTVIGSGLFTYLGILVG), 181–201 (FGGTPALGALAGILIINPEIA), 210–230 (LLPGRGGLIGVLFAAIFIAYT), 250–270 (VSLLITGIVTYVVFMPLGGFI), 281–301 (ILDIGGIAAGFILGATFLPLV), 325–345 (LLPILAMGGAGQVGAAFAVFV), 355–375 (AIAGGLPSGLLGIGEPLIFGV), 399–419 (YFQVATIAIGVSGLPLSFLVL), and 423–443 (IILYIVGLFISYAAGFLLTYA).

It localises to the cell membrane. The phosphoenolpyruvate-dependent sugar phosphotransferase system (sugar PTS), a major carbohydrate active -transport system, catalyzes the phosphorylation of incoming sugar substrates concomitantly with their translocation across the cell membrane. The polypeptide is Putative PTS system EIIBC component YbbF (ybbF) (Bacillus subtilis (strain 168)).